Reading from the N-terminus, the 20-residue chain is Venom prothrombin activator notanarin-D (20 aa).

Residues 1-10 (SNSLFEEVRP) enclose the Gla domain. Residues Glu6 and Glu7 each carry the 4-carboxyglutamate modification. The Peptidase S1 domain maps to 11 to 20 (IVNGMDCKLG).

Belongs to the peptidase S1 family. Snake venom subfamily. Heterodimer of a light chain and a heavy chain; disulfide-linked. Post-translationally, gamma-carboxyglutamate residues are formed by vitamin K dependent carboxylation. These residues are essential for the binding of calcium. Expressed by the venom gland.

It localises to the secreted. The enzyme catalyses Selective cleavage of Arg-|-Thr and then Arg-|-Ile bonds in prothrombin to form thrombin.. Snake prothrombin activator that attacks the hemostatic system of prey. This protein is functionally similar to blood coagulation factor Xa. The protein is Venom prothrombin activator notanarin-D of Notechis scutatus niger (Peninsula tiger snake).